The sequence spans 155 residues: Sec-independent protein translocase protein TatB (155 aa).

A helical transmembrane segment spans residues 1–21 (MFGMGFFEILVVLVVAIIFLG). The tract at residues 109-155 (SLENNAPPKHLNKEVSNREVFHNEPPKEIELIANNNTTKHDKEKEHV) is disordered. Composition is skewed to basic and acidic residues over residues 119–138 (LNKE…KEIE) and 146–155 (TKHDKEKEHV).

It belongs to the TatB family. The Tat system comprises two distinct complexes: a TatABC complex, containing multiple copies of TatA, TatB and TatC subunits, and a separate TatA complex, containing only TatA subunits. Substrates initially bind to the TatABC complex, which probably triggers association of the separate TatA complex to form the active translocon.

The protein localises to the cell inner membrane. Part of the twin-arginine translocation (Tat) system that transports large folded proteins containing a characteristic twin-arginine motif in their signal peptide across membranes. Together with TatC, TatB is part of a receptor directly interacting with Tat signal peptides. TatB may form an oligomeric binding site that transiently accommodates folded Tat precursor proteins before their translocation. In Helicobacter acinonychis (strain Sheeba), this protein is Sec-independent protein translocase protein TatB.